The chain runs to 190 residues: Holliday junction branch migration complex subunit RuvA (190 aa).

The tract at residues 1-64 (MIGRITGTLI…EDAHLLYGFG (64 aa)) is domain I. A domain II region spans residues 65-137 (TASERAAFRE…MRGKLGADIG (73 aa)). The flexible linker stretch occupies residues 137-141 (GATPH). Residues 142–190 (AVPDSQSDILNALLALGYSEKESLAALKTLPEGLGVSDGIRQALKALAR) are domain III.

Belongs to the RuvA family. In terms of assembly, homotetramer. Forms an RuvA(8)-RuvB(12)-Holliday junction (HJ) complex. HJ DNA is sandwiched between 2 RuvA tetramers; dsDNA enters through RuvA and exits via RuvB. An RuvB hexamer assembles on each DNA strand where it exits the tetramer. Each RuvB hexamer is contacted by two RuvA subunits (via domain III) on 2 adjacent RuvB subunits; this complex drives branch migration. In the full resolvosome a probable DNA-RuvA(4)-RuvB(12)-RuvC(2) complex forms which resolves the HJ.

Its subcellular location is the cytoplasm. Its function is as follows. The RuvA-RuvB-RuvC complex processes Holliday junction (HJ) DNA during genetic recombination and DNA repair, while the RuvA-RuvB complex plays an important role in the rescue of blocked DNA replication forks via replication fork reversal (RFR). RuvA specifically binds to HJ cruciform DNA, conferring on it an open structure. The RuvB hexamer acts as an ATP-dependent pump, pulling dsDNA into and through the RuvAB complex. HJ branch migration allows RuvC to scan DNA until it finds its consensus sequence, where it cleaves and resolves the cruciform DNA. This Bordetella avium (strain 197N) protein is Holliday junction branch migration complex subunit RuvA.